The primary structure comprises 496 residues: MLSLIVEATLLLVVLVLSAHYVRRRMKSLPPGPIGIPILGNMLDMPTHDEAQTIAGWSKKYGDMIFVTIAGTPFLYLNGAKETMDLLDKRSALYSECDMGGLVPLTGYGDRFKLERRLMNQALSARAVEKWEPLVAEETNMMLKRILDAPERFIPHLRRMAGSLIFTSIYGYRVTSDDDPYVKAAEEFMSVSSHAILNGWLVDFLPFLRHVPGLTIHKKAAEWKIKMEEWVEKPHAMFKATLADNPDDNSFCRTLLFPEDGHPIDAETEERIKWVATSMYGAGSDTTVASLSQFILAMILHPEVQKKAQNEVDAVVGRDRLPTLDDRARLPYVECVLKECLRWGTPVPLTIPHRLSQVDEYNGHILPEGTLCVANIWAMLHDERIYPEPHRFYPERYEGKMDAEQTRLLDPSTYIFGFGRRRCPGIHFANPSVWLGMVSLLSTFTFTPSLDKKGREIIPPAKFISGTFRHPEPFKCRITPRHEGVPALIEQVQPAF.

Residues 2–22 (LSLIVEATLLLVVLVLSAHYV) form a helical membrane-spanning segment. Residue Cys-423 coordinates heme.

It belongs to the cytochrome P450 family. Heme is required as a cofactor.

It is found in the membrane. It carries out the reaction wigandol + 4 reduced [NADPH--hemoprotein reductase] + 4 O2 = arnebinol A + 4 oxidized [NADPH--hemoprotein reductase] + 6 H2O + 4 H(+). It catalyses the reaction arnebinol A + reduced [NADPH--hemoprotein reductase] + O2 = clavilactone A + oxidized [NADPH--hemoprotein reductase] + H2O + H(+). The enzyme catalyses (2E)-geranylhydroquinone + reduced [NADPH--hemoprotein reductase] + O2 = isoalliodorol + oxidized [NADPH--hemoprotein reductase] + H2O + H(+). It participates in secondary metabolite biosynthesis; terpenoid biosynthesis. Its function is as follows. Cytochrome P450 monooxygenase; part of the gene cluster that mediates the biosynthesis of clavilactone A, a meroterpenoid that features a unique benzo-fused ten-membered carbocyclic ring unit with an alpha,beta-epoxy-gamma-lactone moiety, forming an intriguing 10/5/3 tricyclic nested skeleton. ClaR, ClaS and ClaT are sufficient to produce clavilactone A. Within the pathway, claT acts as a multifunctional cytochrome P450 monooxygenase that catalyzes a ten-electron oxidation to accomplish the biosynthesis of the 10/5/3 tricyclic nested skeleton in clavilactones. The biosynthesis begins with the prenyltransferase claS that transfers geranyl pyrophosphate (GPP) to hydroquinone to produces geranylhydroquinone. The cytochrome P450 monooxygenase claR then catalyzes the diradical coupling reaction between the intramolecular hydroquinone and allyl moieties to form the benzo-fused ten-membered carbocyclic ring unit of wigantol. Finally the cytochrome P450 monooxygenase claT exquisitely and stereoselectively assembles the alpha,beta-epoxy-gamma-lactone moiety, producing clavilactone A via arnebinol A. The protein is Cytochrome P450 monooxygenase claT of Ampulloclitocybe clavipes (Club foot).